The following is a 466-amino-acid chain: 23S rRNA (uracil(1939)-C(5))-methyltransferase RlmD (466 aa).

The 54-residue stretch at 1 to 54 (MVDVLNIESLDLEARGIAHRDGKVLFVEGALPGERVTVQTVRRKPSYEIAKVEE) folds into the TRAM domain. Residues C67, C73, C76, and C155 each coordinate [4Fe-4S] cluster. S-adenosyl-L-methionine contacts are provided by Q264, F293, N298, E314, N342, and D363. C393 serves as the catalytic Nucleophile.

This sequence belongs to the class I-like SAM-binding methyltransferase superfamily. RNA M5U methyltransferase family. RlmD subfamily.

It carries out the reaction uridine(1939) in 23S rRNA + S-adenosyl-L-methionine = 5-methyluridine(1939) in 23S rRNA + S-adenosyl-L-homocysteine + H(+). Its function is as follows. Catalyzes the formation of 5-methyl-uridine at position 1939 (m5U1939) in 23S rRNA. In Bordetella bronchiseptica (strain ATCC BAA-588 / NCTC 13252 / RB50) (Alcaligenes bronchisepticus), this protein is 23S rRNA (uracil(1939)-C(5))-methyltransferase RlmD.